The sequence spans 398 residues: Succinate--CoA ligase [ADP-forming] subunit beta (398 aa).

The 245-residue stretch at 9 to 253 (KEILNSFGVR…VREENATEVE (245 aa)) folds into the ATP-grasp domain. Residues K50, 57-59 (GRG), V106, and E116 contribute to the ATP site. N208 and D222 together coordinate Mg(2+). Substrate contacts are provided by residues N273 and 330–332 (GIV).

It belongs to the succinate/malate CoA ligase beta subunit family. Heterotetramer of two alpha and two beta subunits. Requires Mg(2+) as cofactor.

The enzyme catalyses succinate + ATP + CoA = succinyl-CoA + ADP + phosphate. It catalyses the reaction GTP + succinate + CoA = succinyl-CoA + GDP + phosphate. The protein operates within carbohydrate metabolism; tricarboxylic acid cycle; succinate from succinyl-CoA (ligase route): step 1/1. Functionally, succinyl-CoA synthetase functions in the citric acid cycle (TCA), coupling the hydrolysis of succinyl-CoA to the synthesis of either ATP or GTP and thus represents the only step of substrate-level phosphorylation in the TCA. The beta subunit provides nucleotide specificity of the enzyme and binds the substrate succinate, while the binding sites for coenzyme A and phosphate are found in the alpha subunit. In Christiangramia forsetii (strain DSM 17595 / CGMCC 1.15422 / KT0803) (Gramella forsetii), this protein is Succinate--CoA ligase [ADP-forming] subunit beta.